The chain runs to 92 residues: MTRSLKKNPFVANNLLKKINKLNTKAEKEIIITWSRASTIIPIMVGHTIAIHNGKEHLPIYITDRMVGHKLGEFAPTLNFRGHAKSDNRSRR.

This sequence belongs to the universal ribosomal protein uS19 family.

The protein localises to the plastid. The protein resides in the chloroplast. Its function is as follows. Protein S19 forms a complex with S13 that binds strongly to the 16S ribosomal RNA. In Lactuca sativa (Garden lettuce), this protein is Small ribosomal subunit protein uS19c.